Here is a 519-residue protein sequence, read N- to C-terminus: ATP synthase subunit alpha 2 (519 aa).

Position 179–186 (179–186 (GDRQTGKT)) interacts with ATP.

Belongs to the ATPase alpha/beta chains family. In terms of assembly, F-type ATPases have 2 components, CF(1) - the catalytic core - and CF(0) - the membrane proton channel. CF(1) has five subunits: alpha(3), beta(3), gamma(1), delta(1), epsilon(1). CF(0) has three main subunits: a(1), b(2) and c(9-12). The alpha and beta chains form an alternating ring which encloses part of the gamma chain. CF(1) is attached to CF(0) by a central stalk formed by the gamma and epsilon chains, while a peripheral stalk is formed by the delta and b chains.

It is found in the cell inner membrane. It catalyses the reaction ATP + H2O + 4 H(+)(in) = ADP + phosphate + 5 H(+)(out). Functionally, produces ATP from ADP in the presence of a proton gradient across the membrane. The alpha chain is a regulatory subunit. This chain is ATP synthase subunit alpha 2, found in Syntrophus aciditrophicus (strain SB).